A 531-amino-acid polypeptide reads, in one-letter code: Peptide chain release factor 3 (531 aa).

The tr-type G domain occupies 10 to 278 (RRRRTFAIIS…SLIEWAPAPK (269 aa)). GTP is bound by residues 19–26 (SHPDAGKT), 87–91 (DTPGH), and 141–144 (NKYD).

The protein belongs to the TRAFAC class translation factor GTPase superfamily. Classic translation factor GTPase family. PrfC subfamily.

Its subcellular location is the cytoplasm. Increases the formation of ribosomal termination complexes and stimulates activities of RF-1 and RF-2. It binds guanine nucleotides and has strong preference for UGA stop codons. It may interact directly with the ribosome. The stimulation of RF-1 and RF-2 is significantly reduced by GTP and GDP, but not by GMP. The polypeptide is Peptide chain release factor 3 (Neisseria meningitidis serogroup A / serotype 4A (strain DSM 15465 / Z2491)).